The primary structure comprises 884 residues: Translation initiation factor IF-2 (884 aa).

Disordered stretches follow at residues 42–62 (DVQKVTAPPTPPKGVQQQEEV) and 123–254 (EPKG…GGKK). Basic and acidic residues predominate over residues 194–212 (PAERREVVIPPKRKMEERA). Residues 234-248 (EPETPAGGAPGAKKG) show a composition bias toward low complexity. The tr-type G domain maps to 384-553 (KRPPVVTIMG…LLQADVMDLK (170 aa)). Residues 393-400 (GHVDHGKT) form a G1 region. A GTP-binding site is contributed by 393–400 (GHVDHGKT). A G2 region spans residues 418-422 (GITQH). The G3 stretch occupies residues 439-442 (DTPG). Residues 439–443 (DTPGH) and 493–496 (NKID) contribute to the GTP site. Positions 493-496 (NKID) are G4. Residues 529 to 531 (SAK) form a G5 region.

Belongs to the TRAFAC class translation factor GTPase superfamily. Classic translation factor GTPase family. IF-2 subfamily.

The protein localises to the cytoplasm. In terms of biological role, one of the essential components for the initiation of protein synthesis. Protects formylmethionyl-tRNA from spontaneous hydrolysis and promotes its binding to the 30S ribosomal subunits. Also involved in the hydrolysis of GTP during the formation of the 70S ribosomal complex. The protein is Translation initiation factor IF-2 of Geobacter metallireducens (strain ATCC 53774 / DSM 7210 / GS-15).